The primary structure comprises 88 residues: Protein ORGAN SIZE RELATED 1 (88 aa).

The segment at 25-76 (ITARSVALLLFLSLLLLILPPFLPPLPPPPATLLLLPLLLMILLIFLAFSPS) is organ Size Related (OSR) domain. The next 2 helical transmembrane spans lie at 30-50 (VALLLFLSLLLLILPPFLPPL) and 53-73 (PPATLLLLPLLLMILLIFLAF).

It belongs to the plant organ size related (OSR) protein family. As to expression, mostly expressed in flowers, and, to a lower extent, in leaves and cotyledons.

It localises to the membrane. The protein localises to the endoplasmic reticulum. Its subcellular location is the nucleus. It is found in the cytoplasm. Together with ARGOS and ARL, regulates organ growth and final organ size. Promotes both cell expansion and proliferation-dependent organ growth, in an ANT-dependent manner. The polypeptide is Protein ORGAN SIZE RELATED 1 (Arabidopsis thaliana (Mouse-ear cress)).